Reading from the N-terminus, the 220-residue chain is Ribosomal RNA large subunit methyltransferase E (220 aa).

Positions 60, 62, 92, 108, and 133 each coordinate S-adenosyl-L-methionine. Lys-173 functions as the Proton acceptor in the catalytic mechanism. The interval 197 to 220 (RKPKASRDKSSETFILGRQLKQPR) is disordered.

It belongs to the class I-like SAM-binding methyltransferase superfamily. RNA methyltransferase RlmE family.

It localises to the cytoplasm. The catalysed reaction is uridine(2552) in 23S rRNA + S-adenosyl-L-methionine = 2'-O-methyluridine(2552) in 23S rRNA + S-adenosyl-L-homocysteine + H(+). Its function is as follows. Specifically methylates the uridine in position 2552 of 23S rRNA at the 2'-O position of the ribose in the fully assembled 50S ribosomal subunit. The chain is Ribosomal RNA large subunit methyltransferase E from Burkholderia ambifaria (strain ATCC BAA-244 / DSM 16087 / CCUG 44356 / LMG 19182 / AMMD) (Burkholderia cepacia (strain AMMD)).